A 331-amino-acid polypeptide reads, in one-letter code: Laforin (331 aa).

The CBM20 domain maps to 1–124 (MRFRFGVVVP…NNLVDGVYCL (124 aa)). Ser-25 carries the post-translational modification Phosphoserine; by AMPK. Residues Trp-32, Lys-87, 103–107 (GPHHD), Asp-197, Asp-235, and Arg-241 contribute to the substrate site. Positions 156–323 (HYSRILPNIW…QEDFFQKFGK (168 aa)) constitute a Tyrosine-protein phosphatase domain. The active-site Phosphocysteine intermediate is Cys-266. The Glucan phosphatase signature motif CXAGXGR signature appears at 266–272 (CNAGVGR). Substrate-binding positions include 267–272 (NAGVGR) and Tyr-304.

It belongs to the protein-tyrosine phosphatase family. Homodimer. Interacts with itself. Interacts with PPP1R3B, PPP1R3C, PPP1R3D, HIRIP5, and EPM2AIP1. Binds glycogen and Lafora bodies. Interacts with NHLRC1/malin (via the NHL repeats). Forms a complex with NHLRC1/malin and HSP70. Interacts with PPP1R3D; in the presence of NHLC1/malin the interaction leads to ubiquitination and autophagic degradation of PPP1R3D. Interacts (via the phosphatase domain) with MAPT/Tau; the interaction dephosphorylates MAPT. Isoform 1 and isoform 2 interact to form a heterodimeric complex that lacks phosphatase activity (in vitro). Active phosphatase isoform 7 and isoform 1 interact with each other, but give rise to lower phosphatase activity than isoform 1 or isoform 7 by themselves (in vitro). Active phosphatase isoform 7 and inactive isoform 2 interact with each other, but give rise to lower phosphatase activity than isoform 7 by itself (in vitro). Interacts with PRDM8. Polyubiquitinated by NHLRC1/malin. In terms of processing, phosphorylation on Ser-25 by AMPK affects the phosphatase activity of the enzyme and its ability to homodimerize and interact with NHLRC1, PPP1R3C or PRKAA2. As to expression, expressed in heart, skeletal muscle, kidney, pancreas and brain. Isoform 4 is also expressed in the placenta.

The protein localises to the cytoplasm. It localises to the endoplasmic reticulum membrane. The protein resides in the cell membrane. It is found in the nucleus. It catalyses the reaction O-phospho-L-tyrosyl-[protein] + H2O = L-tyrosyl-[protein] + phosphate. It carries out the reaction O-phospho-L-seryl-[protein] + H2O = L-seryl-[protein] + phosphate. The catalysed reaction is O-phospho-L-threonyl-[protein] + H2O = L-threonyl-[protein] + phosphate. In terms of biological role, plays an important role in preventing glycogen hyperphosphorylation and the formation of insoluble aggregates, via its activity as glycogen phosphatase, and by promoting the ubiquitination of proteins involved in glycogen metabolism via its interaction with the E3 ubiquitin ligase NHLRC1/malin. Shows strong phosphatase activity towards complex carbohydrates in vitro, avoiding glycogen hyperphosphorylation which is associated with reduced branching and formation of insoluble aggregates. Dephosphorylates phosphotyrosine and synthetic substrates, such as para-nitrophenylphosphate (pNPP), and has low activity with phosphoserine and phosphothreonine substrates (in vitro). Has been shown to dephosphorylate MAPT. Forms a complex with NHLRC1/malin and HSP70, which suppresses the cellular toxicity of misfolded proteins by promoting their degradation through the ubiquitin-proteasome system (UPS). Acts as a scaffold protein to facilitate PPP1R3C/PTG ubiquitination by NHLRC1/malin. Also promotes proteasome-independent protein degradation through the macroautophagy pathway. Functionally, does not bind to glycogen. Lacks phosphatase activity and might function as a dominant-negative regulator for the phosphatase activity of isoform 1 and isoform 7. Its function is as follows. Has phosphatase activity (in vitro). In Homo sapiens (Human), this protein is Laforin (EPM2A).